We begin with the raw amino-acid sequence, 331 residues long: Hyaluronidase A (331 aa).

Disulfide bonds link Cys19/Cys308 and Cys185/Cys197. N-linked (GlcNAc...) asparagine glycans are attached at residues Asn79 and Asn99. Glu109 (proton donor) is an active-site residue. Asn127 is a glycosylation site (N-linked (GlcNAc...) asparagine). An N-linked (GlcNAc...) asparagine glycan is attached at Asn325.

The protein belongs to the glycosyl hydrolase 56 family. Expressed by the venom gland.

It localises to the secreted. It catalyses the reaction Random hydrolysis of (1-&gt;4)-linkages between N-acetyl-beta-D-glucosamine and D-glucuronate residues in hyaluronate.. Hydrolyzes high molecular weight hyaluronic acid to produce small oligosaccharides. The chain is Hyaluronidase A from Vespula vulgaris (Yellow jacket).